The following is a 199-amino-acid chain: Pyridoxal 5'-phosphate synthase subunit PdxT (199 aa).

52–54 (GES) is an L-glutamine binding site. C84 functions as the Nucleophile in the catalytic mechanism. L-glutamine-binding positions include R115 and 143–144 (IR). Active-site charge relay system residues include H179 and E181.

It belongs to the glutaminase PdxT/SNO family. As to quaternary structure, in the presence of PdxS, forms a dodecamer of heterodimers. Only shows activity in the heterodimer.

It catalyses the reaction aldehydo-D-ribose 5-phosphate + D-glyceraldehyde 3-phosphate + L-glutamine = pyridoxal 5'-phosphate + L-glutamate + phosphate + 3 H2O + H(+). The enzyme catalyses L-glutamine + H2O = L-glutamate + NH4(+). It participates in cofactor biosynthesis; pyridoxal 5'-phosphate biosynthesis. Catalyzes the hydrolysis of glutamine to glutamate and ammonia as part of the biosynthesis of pyridoxal 5'-phosphate. The resulting ammonia molecule is channeled to the active site of PdxS. The polypeptide is Pyridoxal 5'-phosphate synthase subunit PdxT (Methanosarcina acetivorans (strain ATCC 35395 / DSM 2834 / JCM 12185 / C2A)).